A 149-amino-acid polypeptide reads, in one-letter code: Oligosaccharyltransferase complex subunit OSTC (149 aa).

Residues 1 to 32 (METLYRVPFLVLECPNLKLKKPPWLHMPSAMT) lie on the Cytoplasmic side of the membrane. A helical membrane pass occupies residues 33-53 (VYALVVVSYFLITGGIIYDVI). The Extracellular segment spans residues 54 to 83 (VEPPSVGSMTDEHGHQRPVAFLAYRVNGQY). The chain crosses the membrane as a helical span at residues 84 to 104 (IMEGLASSFLFTMGGLGFIIL). Residues 105–117 (DRSNAPNIPKLNR) lie on the Cytoplasmic side of the membrane. Residues 118–138 (FLLLFIGFVCVLLSFFMARVF) traverse the membrane as a helical segment. Residues 139–149 (MRMKLPGYLMG) are Extracellular-facing.

The protein belongs to the OSTC family. Component of STT3A-containing oligosaccharyl transferase (OST-A) complex. STT3A-containing complex assembly occurs through the formation of 3 subcomplexes. Subcomplex 1 contains RPN1 and TMEM258, subcomplex 2 contains the STT3A-specific subunits STT3A, DC2/OSTC, and KCP2 as well as the core subunit OST4, and subcomplex 3 contains RPN2, DAD1, and OST48. The OST-A complex can form stable complexes with the Sec61 complex or with both the Sec61 and TRAP complexes. Interacts with PSEN1 and NCSTN; indicative for an association with the gamma-secretase complex.

The protein resides in the endoplasmic reticulum. It localises to the membrane. It participates in protein modification; protein glycosylation. Functionally, subunit of STT3A-containing oligosaccharyl transferase (OST-A) complex that catalyzes the initial transfer of a defined glycan (Glc(3)Man(9)GlcNAc(2) in eukaryotes) from the lipid carrier dolichol-pyrophosphate to an asparagine residue within an Asn-X-Ser/Thr consensus motif in nascent polypeptide chains, the first step in protein N-glycosylation. N-glycosylation occurs cotranslationally and the complex associates with the Sec61 complex at the channel-forming translocon complex that mediates protein translocation across the endoplasmic reticulum (ER). Within the OST-A complex, acts as an adapter that anchors the OST-A complex to the Sec61 complex. May be involved in N-glycosylation of APP (amyloid-beta precursor protein). Can modulate gamma-secretase cleavage of APP by enhancing endoprotelysis of PSEN1. The sequence is that of Oligosaccharyltransferase complex subunit OSTC from Homo sapiens (Human).